Reading from the N-terminus, the 502-residue chain is Maturase K (502 aa).

It belongs to the intron maturase 2 family. MatK subfamily.

It is found in the plastid. It localises to the chloroplast. Usually encoded in the trnK tRNA gene intron. Probably assists in splicing its own and other chloroplast group II introns. The polypeptide is Maturase K (Vitis vinifera (Grape)).